Consider the following 217-residue polypeptide: UPF0323 lipoprotein HPP12_0232 (217 aa).

A signal peptide spans M1–G27. Residue C28 is the site of N-palmitoyl cysteine attachment. Residue C28 is the site of S-diacylglycerol cysteine attachment. A compositionally biased stretch (polar residues) spans Q160 to R171. Positions Q160 to S217 are disordered. Over residues S172–S185 the composition is skewed to low complexity. Polar residues predominate over residues M186–F197. The segment covering S199–S210 has biased composition (low complexity).

Belongs to the UPF0323 family.

It localises to the cell membrane. This chain is UPF0323 lipoprotein HPP12_0232, found in Helicobacter pylori (strain P12).